We begin with the raw amino-acid sequence, 265 residues long: Small ribosomal subunit protein uS2 (265 aa).

This sequence belongs to the universal ribosomal protein uS2 family.

The polypeptide is Small ribosomal subunit protein uS2 (Gluconobacter oxydans (strain 621H) (Gluconobacter suboxydans)).